Here is a 308-residue protein sequence, read N- to C-terminus: Cytochrome c biogenesis protein CcsA (308 aa).

7 helical membrane passes run 2–22 (IVST…SILI), 44–64 (GMLV…IYLG), 71–91 (LSES…IAYF), 143–163 (MILG…LMVI), 212–232 (VIGL…VWAN), 239–259 (WSWD…AIYL), and 273–293 (AIVA…VNLV).

Belongs to the CcmF/CycK/Ccl1/NrfE/CcsA family. In terms of assembly, may interact with Ccs1.

Its subcellular location is the plastid membrane. Its function is as follows. Required during biogenesis of c-type cytochromes (cytochrome c6 and cytochrome f) at the step of heme attachment. The chain is Cytochrome c biogenesis protein CcsA from Cuscuta exaltata (Tall dodder).